The following is a 697-amino-acid chain: Elongation factor G (697 aa).

The region spanning 8–282 is the tr-type G domain; sequence EDYRNIGIMA…AIVDYLPSPL (275 aa). GTP-binding positions include 17-24, 81-85, and 135-138; these read AHIDAGKT, DTPGH, and NKMD.

It belongs to the TRAFAC class translation factor GTPase superfamily. Classic translation factor GTPase family. EF-G/EF-2 subfamily.

The protein localises to the cytoplasm. In terms of biological role, catalyzes the GTP-dependent ribosomal translocation step during translation elongation. During this step, the ribosome changes from the pre-translocational (PRE) to the post-translocational (POST) state as the newly formed A-site-bound peptidyl-tRNA and P-site-bound deacylated tRNA move to the P and E sites, respectively. Catalyzes the coordinated movement of the two tRNA molecules, the mRNA and conformational changes in the ribosome. The chain is Elongation factor G from Metamycoplasma arthritidis (strain 158L3-1) (Mycoplasma arthritidis).